The following is a 134-amino-acid chain: D-ribose pyranase (134 aa).

Catalysis depends on histidine 20, which acts as the Proton donor. Substrate is bound by residues aspartate 28, histidine 99, and tyrosine 123–asparagine 125.

The protein belongs to the RbsD / FucU family. RbsD subfamily. Homodecamer.

The protein resides in the cytoplasm. The catalysed reaction is beta-D-ribopyranose = beta-D-ribofuranose. It functions in the pathway carbohydrate metabolism; D-ribose degradation; D-ribose 5-phosphate from beta-D-ribopyranose: step 1/2. Its function is as follows. Catalyzes the interconversion of beta-pyran and beta-furan forms of D-ribose. This chain is D-ribose pyranase, found in Staphylococcus aureus (strain USA300).